The following is a 176-amino-acid chain: Large ribosomal subunit protein uL6 (176 aa).

It belongs to the universal ribosomal protein uL6 family. As to quaternary structure, part of the 50S ribosomal subunit.

In terms of biological role, this protein binds to the 23S rRNA, and is important in its secondary structure. It is located near the subunit interface in the base of the L7/L12 stalk, and near the tRNA binding site of the peptidyltransferase center. The protein is Large ribosomal subunit protein uL6 of Paraburkholderia phytofirmans (strain DSM 17436 / LMG 22146 / PsJN) (Burkholderia phytofirmans).